The sequence spans 596 residues: MTDLTAQEPAWQTRDHLDDPVIGELRNRFGPDAFTVQATRTGVPVVWIKREQLLEVGDFLKKLPKPYVMLFDLHGMDERLRTHREGLPAADFSVFYHLISIDRNRDIMLKVALAENDLHVPTFTKLFPNANWYERETWDLFGITFDGHPNLRRIMMPQTWKGHPLRKDYPARATEFSPFELTKAKQDLEMEALTFKPEEWGMKRGTENEDFMFLNLGPNHPSAHGAFRIVLQLDGEEIVDCVPDIGYHHRGAEKMGERQSWHSYIPYTDRIEYLGGCVNEMPYVLAVEKLAGITVPDRVNVIRVMLSELFRINSHLLYISTFIQDVGAMTPVFFAFTDRQKIYDLVEAITGFRMHPAWFRIGGVAHDLPRGWDRLLREFLDWMPKRLASYEKAALQNTILKGRSQGVAAYGAKEALEWGTTGAGLRATGIDFDVRKARPYSGYENFDFEIPVGGGVSDCYTRVMLKVEELRQSLRILEQCLNNMPEGPFKADHPLTTPPPKERTLQHIETLITHFLQVSWGPVMPANESFQMIEATKGINSYYLTSDGSTMSYRTRIRTPSYAHLQQIPAAIRGSLVSDLIVYLGSIDFVMSDVDR.

Residues 1–186 (MTDLTAQEPA…SPFELTKAKQ (186 aa)) are NADH dehydrogenase I subunit C. Positions 210–596 (DFMFLNLGPN…IDFVMSDVDR (387 aa)) are NADH dehydrogenase I subunit D.

The protein in the N-terminal section; belongs to the complex I 30 kDa subunit family. This sequence in the C-terminal section; belongs to the complex I 49 kDa subunit family. In terms of assembly, NDH-1 is composed of 13 different subunits. Subunits NuoB, CD, E, F, and G constitute the peripheral sector of the complex.

Its subcellular location is the cell inner membrane. The enzyme catalyses a quinone + NADH + 5 H(+)(in) = a quinol + NAD(+) + 4 H(+)(out). Functionally, NDH-1 shuttles electrons from NADH, via FMN and iron-sulfur (Fe-S) centers, to quinones in the respiratory chain. The immediate electron acceptor for the enzyme in this species is believed to be ubiquinone. Couples the redox reaction to proton translocation (for every two electrons transferred, four hydrogen ions are translocated across the cytoplasmic membrane), and thus conserves the redox energy in a proton gradient. In Shigella flexneri serotype 5b (strain 8401), this protein is NADH-quinone oxidoreductase subunit C/D.